Consider the following 317-residue polypeptide: Ribose-phosphate pyrophosphokinase (317 aa).

ATP-binding positions include 43–45 (DGE) and 102–103 (RQ). Mg(2+) is bound by residues His-136 and Asp-175. The active site involves Lys-198. D-ribose 5-phosphate is bound by residues Arg-200, Asp-224, and 228 to 232 (DTAGT).

This sequence belongs to the ribose-phosphate pyrophosphokinase family. Class I subfamily. In terms of assembly, homohexamer. Mg(2+) serves as cofactor.

It localises to the cytoplasm. It catalyses the reaction D-ribose 5-phosphate + ATP = 5-phospho-alpha-D-ribose 1-diphosphate + AMP + H(+). Its pathway is metabolic intermediate biosynthesis; 5-phospho-alpha-D-ribose 1-diphosphate biosynthesis; 5-phospho-alpha-D-ribose 1-diphosphate from D-ribose 5-phosphate (route I): step 1/1. Functionally, involved in the biosynthesis of the central metabolite phospho-alpha-D-ribosyl-1-pyrophosphate (PRPP) via the transfer of pyrophosphoryl group from ATP to 1-hydroxyl of ribose-5-phosphate (Rib-5-P). This Oceanobacillus iheyensis (strain DSM 14371 / CIP 107618 / JCM 11309 / KCTC 3954 / HTE831) protein is Ribose-phosphate pyrophosphokinase.